An 86-amino-acid polypeptide reads, in one-letter code: Cell division topological specificity factor (86 aa).

It belongs to the MinE family.

In terms of biological role, prevents the cell division inhibition by proteins MinC and MinD at internal division sites while permitting inhibition at polar sites. This ensures cell division at the proper site by restricting the formation of a division septum at the midpoint of the long axis of the cell. The sequence is that of Cell division topological specificity factor from Albidiferax ferrireducens (strain ATCC BAA-621 / DSM 15236 / T118) (Rhodoferax ferrireducens).